We begin with the raw amino-acid sequence, 830 residues long: uncharacterized protein (830 aa).

Over residues 1-12 the composition is skewed to basic and acidic residues; that stretch reads MEKASKNKESGV. The interval 1 to 61 is disordered; sequence MEKASKNKES…SIKSKNKKKT (61 aa). Over residues 15–25 the composition is skewed to polar residues; the sequence is ANNSFLQNFGV. The Helicase ATP-binding domain occupies 249-433; sequence TVSKSSASGG…YSLVKFLHIN (185 aa). An ATP-binding site is contributed by 262–269; the sequence is DDMGLGKT. The DEAH box signature appears at 384-387; the sequence is DEAH. Positions 662 to 816 constitute a Helicase C-terminal domain; that stretch reads EEDDTVRGLR…KSVFTSKKLT (155 aa). Phosphoserine is present on Ser712.

The protein belongs to the SNF2/RAD54 helicase family.

It localises to the nucleus. This is an uncharacterized protein from Schizosaccharomyces pombe (strain 972 / ATCC 24843) (Fission yeast).